A 184-amino-acid polypeptide reads, in one-letter code: dCTP deaminase (184 aa).

K107 to R112 provides a ligand contact to dCTP. E133 serves as the catalytic Proton donor/acceptor. 3 residues coordinate dCTP: Q152, Y166, and Q176.

This sequence belongs to the dCTP deaminase family. In terms of assembly, homotrimer.

The catalysed reaction is dCTP + H2O + H(+) = dUTP + NH4(+). It functions in the pathway pyrimidine metabolism; dUMP biosynthesis; dUMP from dCTP (dUTP route): step 1/2. Its function is as follows. Catalyzes the deamination of dCTP to dUTP. This Herpetosiphon aurantiacus (strain ATCC 23779 / DSM 785 / 114-95) protein is dCTP deaminase.